The sequence spans 148 residues: Receptor activity-modifying protein 3 (148 aa).

The first 23 residues, 1-23, serve as a signal peptide directing secretion; the sequence is METGALRRPQLLPLLLLLCGGCP. Over 24–113 the chain is Extracellular; the sequence is RAGGCNETGM…CTVDRVHLED (90 aa). 4 N-linked (GlcNAc...) asparagine glycosylation sites follow: asparagine 29, asparagine 58, asparagine 71, and asparagine 103. Cystine bridges form between cysteine 40–cysteine 72 and cysteine 57–cysteine 104. Residues 114–138 traverse the membrane as a helical segment; sequence PPDEVLIPLIVIPVVLTVAMAGLVV. At 139-148 the chain is on the cytoplasmic side; sequence WRSKRTDTLL.

The protein belongs to the RAMP family. As to quaternary structure, heterodimer of CALCRL and RAMP3; interaction induces allosteric modulation of CALCRL function and ligand specificity for adrenomedullin/ADM and intermedin/ADM2. Heterodimer of CALCR and RAMP3; interaction form the receptor complex AMYR3 for amylin/IAPP. Interacts with GPER1. As to expression, strongly expressed in lung, breast, immune system and fetal tissues.

Its subcellular location is the cell membrane. The protein resides in the membrane. Functionally, accessory protein that interacts with and modulates the function of G-protein coupled receptors including calcitonin gene-related peptide type 1 receptor (CALCRL), calcitonin receptor (CALCR) and G-protein coupled estrogen receptor 1 (GPER1). Required for the transport of CALCRL and GPER1 receptors to the plasma membrane. Plays a role in cardioprotection by reducing cardiac hypertrophy and perivascular fibrosis in a GPER1-dependent manner. Together with CALCRL, form a receptor complex for adrenomedullin/ADM and intermedin/ADM2. Together with CALCR, act as a receptor complex for amylin/IAPP. In Homo sapiens (Human), this protein is Receptor activity-modifying protein 3.